We begin with the raw amino-acid sequence, 126 residues long: Glycine cleavage system H protein (126 aa).

Residues 24 to 106 form the Lipoyl-binding domain; the sequence is TITVGITDHA…YGEGWFFRMK (83 aa). An N6-lipoyllysine modification is found at Lys65.

This sequence belongs to the GcvH family. The glycine cleavage system is composed of four proteins: P, T, L and H. (R)-lipoate is required as a cofactor.

In terms of biological role, the glycine cleavage system catalyzes the degradation of glycine. The H protein shuttles the methylamine group of glycine from the P protein to the T protein. The sequence is that of Glycine cleavage system H protein from Psychrobacter arcticus (strain DSM 17307 / VKM B-2377 / 273-4).